The sequence spans 536 residues: 2-isopropylmalate synthase (536 aa).

Positions 8–273 constitute a Pyruvate carboxyltransferase domain; the sequence is VLIFDTTLRD…FFGRDPESPT (266 aa). Mn(2+)-binding residues include aspartate 17, histidine 208, histidine 210, and asparagine 244. Residues 408–536 are regulatory domain; that stretch reads QLQLVQVSCG…PQHDLIKANL (129 aa).

It belongs to the alpha-IPM synthase/homocitrate synthase family. LeuA type 1 subfamily. Homodimer. It depends on Mn(2+) as a cofactor.

The protein localises to the cytoplasm. The catalysed reaction is 3-methyl-2-oxobutanoate + acetyl-CoA + H2O = (2S)-2-isopropylmalate + CoA + H(+). It participates in amino-acid biosynthesis; L-leucine biosynthesis; L-leucine from 3-methyl-2-oxobutanoate: step 1/4. Its function is as follows. Catalyzes the condensation of the acetyl group of acetyl-CoA with 3-methyl-2-oxobutanoate (2-ketoisovalerate) to form 3-carboxy-3-hydroxy-4-methylpentanoate (2-isopropylmalate). In Prochlorococcus marinus (strain MIT 9211), this protein is 2-isopropylmalate synthase.